The following is a 169-amino-acid chain: dCTP pyrophosphatase 1 (169 aa).

Residues 1–26 form a disordered region; the sequence is MSASEEMLGGARGESTTATGPFSFSS. Polar residues predominate over residues 14–26; sequence ESTTATGPFSFSS. Substrate contacts are provided by residues His-37 and 46 to 50; that span reads WEQFH. Positions 62 and 65 each coordinate Mg(2+). Residue Trp-72 participates in substrate binding. A Phosphoserine modification is found at Ser-84. Positions 94 and 97 each coordinate Mg(2+). Tyr-101 serves as a coordination point for substrate. Residues 143-169 are disordered; that stretch reads LPHGATSENQAMGPADPASESTGQVST.

In terms of assembly, homotetramer. It depends on Mg(2+) as a cofactor.

Its subcellular location is the cytoplasm. The protein resides in the cytosol. It carries out the reaction dCTP + H2O = dCMP + diphosphate + H(+). Functionally, hydrolyzes deoxynucleoside triphosphates (dNTPs) to the corresponding nucleoside monophosphates. Has a strong preference for dCTP and its analogs including 5-iodo-dCTP and 5-methyl-dCTP for which it may even have a higher efficiency. May protect DNA or RNA against the incorporation of these genotoxic nucleotide analogs through their catabolism. The protein is dCTP pyrophosphatase 1 of Bos taurus (Bovine).